The sequence spans 421 residues: UDP-N-acetylglucosamine 1-carboxyvinyltransferase 2 (421 aa).

Residue 22–23 (KN) coordinates phosphoenolpyruvate. R95 contributes to the UDP-N-acetyl-alpha-D-glucosamine binding site. Residue C119 is the Proton donor of the active site. A 2-(S-cysteinyl)pyruvic acid O-phosphothioketal modification is found at C119. UDP-N-acetyl-alpha-D-glucosamine contacts are provided by residues 124-128 (RPIEQ), D308, and V330.

This sequence belongs to the EPSP synthase family. MurA subfamily.

Its subcellular location is the cytoplasm. It catalyses the reaction phosphoenolpyruvate + UDP-N-acetyl-alpha-D-glucosamine = UDP-N-acetyl-3-O-(1-carboxyvinyl)-alpha-D-glucosamine + phosphate. It functions in the pathway cell wall biogenesis; peptidoglycan biosynthesis. Cell wall formation. Adds enolpyruvyl to UDP-N-acetylglucosamine. This chain is UDP-N-acetylglucosamine 1-carboxyvinyltransferase 2, found in Staphylococcus saprophyticus subsp. saprophyticus (strain ATCC 15305 / DSM 20229 / NCIMB 8711 / NCTC 7292 / S-41).